The sequence spans 183 residues: Threonylcarbamoyl-AMP synthase (183 aa).

A YrdC-like domain is found at 1 to 183 (MNITQIIEKL…LFTNQLVRQG (183 aa)).

This sequence belongs to the SUA5 family. TsaC subfamily.

Its subcellular location is the cytoplasm. It catalyses the reaction L-threonine + hydrogencarbonate + ATP = L-threonylcarbamoyladenylate + diphosphate + H2O. In terms of biological role, required for the formation of a threonylcarbamoyl group on adenosine at position 37 (t(6)A37) in tRNAs that read codons beginning with adenine. Catalyzes the conversion of L-threonine, HCO(3)(-)/CO(2) and ATP to give threonylcarbamoyl-AMP (TC-AMP) as the acyladenylate intermediate, with the release of diphosphate. The chain is Threonylcarbamoyl-AMP synthase from Histophilus somni (strain 2336) (Haemophilus somnus).